The following is a 625-amino-acid chain: MSQESDNNKRLVALVPMPSDPPFNTRRAYTSEDEAWKSYLENPLTAATKAMMSINGDEDSAAALGLLYDYYKVPRDKRLLSVSKASDSQEDQEKRNCLGTSEAQSNLSGGENRVQVLKTVPVNLSLNQDHLENSKREQYSISFPESSAIIPVSGITVVKAEDFTPVFMAPPVHYPRGDGEEQRVVIFEQTQYDVPSLATHSAYLKDDQRSTPDSTYSESFKDAATEKFRSASVGAEEYMYDQTSSGTFQYTLEATKSLRQKQGEGPMTYLNKGQFYAITLSETGDNKCFRHPISKVRSVVMVVFSEDKNRDEQLKYWKYWHSRQHTAKQRVLDIADYKESFNTIGNIEEIAYNAVSFTWDVNEEAKIFITVNCLSTDFSSQKGVKGLPLMIQIDTYSYNNRSNKPIHRAYCQIKVFCDKGAERKIRDEERKQNRKKGKGQASQTQCNSSSDGKLAAIPLQKKSDITYFKTMPDLHSQPVLFIPDVHFANLQRTGQVYYNTDDEREGGSVLVKRMFRPMEEEFGPVPSKQMKEEGTKRVLLYVRKETDDVFDALMLKSPTVKGLMEAISEKYGLPVEKIAKLYKKSKKGILVNMDDNIIEHYSNEDTFILNMESMVEGFKVTLMEI.

3 disordered regions span residues 1-24 (MSQESDNNKRLVALVPMPSDPPFN), 82-112 (VSKASDSQEDQEKRNCLGTSEAQSNLSGGEN), and 428-453 (EERKQNRKKGKGQASQTQCNSSSDGK). Residues 1 to 93 (MSQESDNNKR…KASDSQEDQE (93 aa)) are transcription activation. 2 stretches are compositionally biased toward polar residues: residues 98–109 (LGTSEAQSNLSG) and 440–451 (QASQTQCNSSSD). The region spanning 244-482 (SSGTFQYTLE…DLHSQPVLFI (239 aa)) is the Grh/CP2 DB domain.

Belongs to the grh/CP2 family. Grainyhead subfamily. In terms of assembly, homodimer, also forms heterodimers with GRHL1 or GRHL3. In terms of tissue distribution, expressed in keratinocytes (at protein level). Highly expressed in placenta, prostate, brain and kidney. Lower-level expression in a variety of epithelial tissues such as thymus, lung, salivary gland, mammary gland and digestive tract. Expressed in the cochlear. Expressed in corneal epithelial cells, but not in the endothelium or stroma.

It is found in the nucleus. Its subcellular location is the membrane. Transcription factor playing an important role in primary neurulation and in epithelial development. Binds directly to the consensus DNA sequence 5'-AACCGGTT-3' acting as an activator and repressor on distinct target genes. During embryogenesis, plays unique and cooperative roles with GRHL3 in establishing distinct zones of primary neurulation. Essential for closure 3 (rostral end of the forebrain), functions cooperatively with GRHL3 in closure 2 (forebrain/midbrain boundary) and posterior neuropore closure. Regulates epithelial morphogenesis acting as a target gene-associated transcriptional activator of apical junctional complex components. Up-regulates of CLDN3 and CLDN4, as well as of RAB25, which increases the CLDN4 protein and its localization at tight junctions. Comprises an essential component of the transcriptional machinery that establishes appropriate expression levels of CLDN4 and CDH1 in different types of epithelia. Exhibits functional redundancy with GRHL3 in epidermal morphogenetic events and epidermal wound repair. In lung, forms a regulatory loop with NKX2-1 that coordinates lung epithelial cell morphogenesis and differentiation. In keratinocytes, plays a role in telomerase activation during cellular proliferation, regulates TERT expression by binding to TERT promoter region and inhibiting DNA methylation at the 5'-CpG island, possibly by interfering with DNMT1 enzyme activity. In addition, impairs keratinocyte differentiation and epidermal function by inhibiting the expression of genes clustered at the epidermal differentiation complex (EDC) as well as GRHL1 and GRHL3 through epigenetic mechanisms. This chain is Grainyhead-like protein 2 homolog (GRHL2), found in Homo sapiens (Human).